The sequence spans 147 residues: Hemoglobin subunit epsilon-4 (147 aa).

Residues 3–147 (HFTTEEKAAV…VANALAHKYH (145 aa)) enclose the Globin domain. Residues His64 and His93 each contribute to the heme b site.

It belongs to the globin family. In terms of tissue distribution, red blood cells.

In terms of biological role, hemoglobin epsilon chain is a beta-type chain found in early embryos. The polypeptide is Hemoglobin subunit epsilon-4 (HBE4) (Bos taurus (Bovine)).